The primary structure comprises 303 residues: Glycine--tRNA ligase alpha subunit (303 aa).

It belongs to the class-II aminoacyl-tRNA synthetase family. Tetramer of two alpha and two beta subunits.

It is found in the cytoplasm. It carries out the reaction tRNA(Gly) + glycine + ATP = glycyl-tRNA(Gly) + AMP + diphosphate. The sequence is that of Glycine--tRNA ligase alpha subunit from Escherichia fergusonii (strain ATCC 35469 / DSM 13698 / CCUG 18766 / IAM 14443 / JCM 21226 / LMG 7866 / NBRC 102419 / NCTC 12128 / CDC 0568-73).